The following is a 574-amino-acid chain: Pyruvate kinase PKLR (574 aa).

Phosphoserine is present on residues Ser-2, Ser-19, Ser-26, and Ser-43. Residue Arg-116 participates in substrate binding. K(+) is bound by residues Asn-118, Ser-120, Asp-156, and Thr-157. ATP is bound at residue 118-121 (NFSH). Positions 163 and 250 each coordinate ATP. At Ser-292 the chain carries Phosphoserine. Lys-313 contributes to the substrate binding site. Residue Glu-315 coordinates Mn(2+). Gly-338, Asp-339, and Thr-371 together coordinate substrate. Position 339 (Asp-339) interacts with Mn(2+). Beta-D-fructose 1,6-bisphosphate-binding positions include 475 to 480 (TKTGRS), Trp-525, Arg-532, and 559 to 564 (RPGSGY).

This sequence belongs to the pyruvate kinase family. In terms of assembly, homotetramer. Mg(2+) is required as a cofactor. Requires Mn(2+) as cofactor. K(+) serves as cofactor.

It carries out the reaction pyruvate + ATP = phosphoenolpyruvate + ADP + H(+). The protein operates within carbohydrate degradation; glycolysis; pyruvate from D-glyceraldehyde 3-phosphate: step 5/5. Its activity is regulated as follows. Allosterically activated by fructose 1,6-bisphosphate. Its function is as follows. Pyruvate kinase that catalyzes the conversion of phosphoenolpyruvate to pyruvate with the synthesis of ATP, and which plays a key role in glycolysis. The sequence is that of Pyruvate kinase PKLR (Pklr) from Rattus norvegicus (Rat).